A 107-amino-acid chain; its full sequence is Nucleoid-associated protein PHZ_c0369 (107 aa).

Belongs to the YbaB/EbfC family. Homodimer.

The protein localises to the cytoplasm. The protein resides in the nucleoid. Functionally, binds to DNA and alters its conformation. May be involved in regulation of gene expression, nucleoid organization and DNA protection. This chain is Nucleoid-associated protein PHZ_c0369, found in Phenylobacterium zucineum (strain HLK1).